A 211-amino-acid polypeptide reads, in one-letter code: Redox-sensing transcriptional repressor Rex (211 aa).

Positions 18–57 form a DNA-binding region, H-T-H motif; the sequence is LYYRFLENLHASGKQRVSSSELSEAVKVDSATIRRDFSYF. 92–97 serves as a coordination point for NAD(+); the sequence is GVGNLG.

It belongs to the transcriptional regulatory Rex family. In terms of assembly, homodimer.

The protein resides in the cytoplasm. Its function is as follows. Modulates transcription in response to changes in cellular NADH/NAD(+) redox state. The chain is Redox-sensing transcriptional repressor Rex from Halalkalibacterium halodurans (strain ATCC BAA-125 / DSM 18197 / FERM 7344 / JCM 9153 / C-125) (Bacillus halodurans).